Consider the following 612-residue polypeptide: Glutamine--fructose-6-phosphate aminotransferase [isomerizing] (612 aa).

C2 functions as the Nucleophile; for GATase activity in the catalytic mechanism. The Glutamine amidotransferase type-2 domain maps to 2-217 (CGIVGGVAER…EGDIARLTRD (216 aa)). 2 consecutive SIS domains span residues 283–428 (AEAD…VKEQ) and 461–602 (LSEL…VDQP). Catalysis depends on K607, which acts as the For Fru-6P isomerization activity.

Homodimer.

It is found in the cytoplasm. The catalysed reaction is D-fructose 6-phosphate + L-glutamine = D-glucosamine 6-phosphate + L-glutamate. Functionally, catalyzes the first step in hexosamine metabolism, converting fructose-6P into glucosamine-6P using glutamine as a nitrogen source. This is Glutamine--fructose-6-phosphate aminotransferase [isomerizing] from Acinetobacter baylyi (strain ATCC 33305 / BD413 / ADP1).